Consider the following 1099-residue polypeptide: Adenylate-forming reductase Nps11 (1099 aa).

Residues 29-360 (AEHNSNVPFF…GTECGGLNSM (332 aa)) form an adenylation (A) domain region. AMP-binding positions include H244, 347-348 (NV), T352, and 432-435 (LVGR). The Carrier domain occupies 578 to 664 (WSEESLVVWL…RLSQALARVV (87 aa)). Position 613 is an O-(pantetheine 4'-phosphoryl)serine (S613). The interval 717 to 952 (LTGSTGGLGS…VVSWLPPHAV (236 aa)) is reductase (R) domain. NADP(+) contacts are provided by residues 721-724 (TGGL), 809-811 (NAW), Y883, and K887.

It belongs to the adenylate-forming reductase family.

In terms of biological role, adenylate-forming reductase, a natural product biosynthesis enzyme that resembles non-ribosomal peptide synthetases, yet serves to modify one substrate, rather than to condense two or more building blocks. The A-domain preferentially accepts benzoic acid as substrate. The natural product of the enzyme is not yet known. The protein is Adenylate-forming reductase Nps11 of Serpula lacrymans var. lacrymans (strain S7.9) (Dry rot fungus).